The following is a 1098-amino-acid chain: PIRESVRVSTDRDPDLEDEKREQLGESMQTELERLTWGVEVGTSEDINVDTVKRWGLQNNKYNAEHWIPPGGQRTAEDMGKLYQFWDEFIETYENEVMMNSGYREPLNKDKVFNTLLDHSNNKTNQTAEELKGIQTKIERMTMYFYEANVYESLGQLKNKFINIDEQTAKDYLLDKLEKPDDLDIVRAMGTYTLECIVVFVLSKQFNVFALDKASVQVATLVSELDSAAKIEYNRIIAEDRKRKKAKWGDKQINEDENILLQDKGVDTFNGDVHSELDRKKKSISKQTNRKRVRISKHKEPGIGEALFGWLASRKLIEVKKPVFLFDKKNKKPKNVIYPGYVDCLFDIKDLPFCSTLPMVYPPADWELWPTATAEVSDPYITNLTPLSSYRGGYLTSLQRESGDSPTLLSEKDYGVFDIHIDRERSQPVLSAVKKLQWQPYRINKLVYDFIQKHWSVLVSVGLLRPKNLALFKRKEALRLLSSLLFKHEELSTIYRYSELKSVLLKNIHASTFELYTMKIAEAYLDYKIYFPIFLDFRGRNYRHGPFHFHERDLVRSLIIFDESDDSAAHTINSDVGDRILHNFLISAAYHKSKFGVYREALEFIYNKIEDMQSKPTFFEKDIFVDTLCCRHPFQYISSCISLKTYADTKDLSVLRYTPVFQDASASAYQIMSYFLLDIDYGIHTNLLKKTNTDGRYIRDIYEFMWGCLIKYLIAEEKIELAIKLLTPNEKDQESVLAKIVSIFDRNVVKKMFMPMMYGKTDYTLKKDVEDLLKGKSDSEGINLISKHISTYWKVNFGKMKDLMDLINYVSWFGAGQDKPVVYSTPYWVTLQTYKWRKRVKMKIQYETTKNNEKEVKTTSAKMLIPLNDNDIRKSSTSTFANFIHQKDAFTAIQLVDFINKLENASSIPIYAVHDNFITMPEYASILPTLYRDSIFRMGHPLIIINKFLFDHILIPAIQNEHPQNKHLFSVEERSMLDRMMIDLQNPLIPDFGSVDITKARIKSIVIPKDLLLKCFSCLWMSKTKKISLVRWESCRDKIIKVYMRYTDDISSDEGVSRWLEYKNNLEFASDPVWSSDNTNGTQADSLDKGEDDYCIHY.

Basic and acidic residues predominate over residues Pro1–Leu24. Residues Pro1–Glu26 are disordered. Residues Asp663, Lys750, and Asp915 contribute to the active site.

The protein belongs to the phage and mitochondrial RNA polymerase family.

The protein localises to the mitochondrion. The enzyme catalyses RNA(n) + a ribonucleoside 5'-triphosphate = RNA(n+1) + diphosphate. Functionally, DNA-dependent RNA polymerase catalyzes the transcription of DNA into RNA using the four ribonucleoside triphosphates as substrates. The polypeptide is Probable DNA-directed RNA polymerase (Zea mays (Maize)).